The sequence spans 252 residues: Aspartate/glutamate leucyltransferase (252 aa).

It belongs to the R-transferase family. Bpt subfamily.

Its subcellular location is the cytoplasm. It carries out the reaction N-terminal L-glutamyl-[protein] + L-leucyl-tRNA(Leu) = N-terminal L-leucyl-L-glutamyl-[protein] + tRNA(Leu) + H(+). The catalysed reaction is N-terminal L-aspartyl-[protein] + L-leucyl-tRNA(Leu) = N-terminal L-leucyl-L-aspartyl-[protein] + tRNA(Leu) + H(+). Its function is as follows. Functions in the N-end rule pathway of protein degradation where it conjugates Leu from its aminoacyl-tRNA to the N-termini of proteins containing an N-terminal aspartate or glutamate. In Agrobacterium fabrum (strain C58 / ATCC 33970) (Agrobacterium tumefaciens (strain C58)), this protein is Aspartate/glutamate leucyltransferase.